A 221-amino-acid chain; its full sequence is Casparian strip membrane protein 3 (221 aa).

Residues 1-12 (MDIEKAGSRREE) show a composition bias toward basic and acidic residues. The interval 1-27 (MDIEKAGSRREEEEPIVQRPKLDKGKG) is disordered. Topologically, residues 1–58 (MDIEKAGSRREEEEPIVQRPKLDKGKGKAHVFAPPMNYNRIMDKHKQEKMSPAGWKRG) are cytoplasmic. A helical membrane pass occupies residues 59-79 (VAIFDFVLRLIAAITAMAAAA). Topologically, residues 80-109 (KMATTEETLPFFTQFLQFQADYTDLPTMSS) are extracellular. The helical transmembrane segment at 110–130 (FVIVNSIVGGYLTLSLPFSIV) threads the bilayer. Over 131-148 (CILRPLAVPPRLFLILCD) the chain is Cytoplasmic. Residues 149-169 (TVMMGLTLMAASASAAIVYLA) traverse the membrane as a helical segment. Over 170-194 (HNGNSSSNWLPVCQQFGDFCQGTSG) the chain is Extracellular. Asn-173 is a glycosylation site (N-linked (GlcNAc...) asparagine). The chain crosses the membrane as a helical span at residues 195 to 215 (AVVASFIAATLLMFLVILSAF). At 216–221 (ALKRTT) the chain is on the cytoplasmic side.

The protein belongs to the Casparian strip membrane proteins (CASP) family. Homodimer and heterodimers with other CASP proteins. Interacts with CASP1, CASP2, CASP4 and CASP5.

The protein localises to the cell membrane. In terms of biological role, regulates membrane-cell wall junctions and localized cell wall deposition. Required for establishment of the Casparian strip membrane domain (CSD) and the subsequent formation of Casparian strips, a cell wall modification of the root endodermis that determines an apoplastic barrier between the intraorganismal apoplasm and the extraorganismal apoplasm and prevents lateral diffusion. The sequence is that of Casparian strip membrane protein 3 (CASP3) from Arabidopsis thaliana (Mouse-ear cress).